The primary structure comprises 438 residues: Dihydrolipoyllysine-residue acetyltransferase component of pyruvate dehydrogenase complex (438 aa).

Residues 1–76 form the Lipoyl-binding domain; the sequence is MFKVKFADIG…KVGDVVMEIE (76 aa). Lysine 42 is subject to N6-lipoyllysine. The Peripheral subunit-binding (PSBD) domain occupies 132–169; that stretch reads KATPLARKVAADLNIDLSLVTPTGPNQRILVADIKNHQ. Residues 172-181 are compositionally biased toward polar residues; the sequence is STQLASQPIS. The disordered stretch occupies residues 172-192; that stretch reads STQLASQPISQPAPTPSPSAH. Histidine 411 is an active-site residue.

Belongs to the 2-oxoacid dehydrogenase family. As to quaternary structure, forms a 24-polypeptide structural core with octahedral symmetry. (R)-lipoate serves as cofactor.

It catalyses the reaction N(6)-[(R)-dihydrolipoyl]-L-lysyl-[protein] + acetyl-CoA = N(6)-[(R)-S(8)-acetyldihydrolipoyl]-L-lysyl-[protein] + CoA. Functionally, the pyruvate dehydrogenase complex catalyzes the overall conversion of pyruvate to acetyl-CoA and CO(2). It contains multiple copies of three enzymatic components: pyruvate dehydrogenase (E1), dihydrolipoamide acetyltransferase (E2) and lipoamide dehydrogenase (E3). The protein is Dihydrolipoyllysine-residue acetyltransferase component of pyruvate dehydrogenase complex (pdhC) of Mycoplasma capricolum subsp. capricolum (strain California kid / ATCC 27343 / NCTC 10154).